Reading from the N-terminus, the 720-residue chain is Fatty acid CoA ligase Acsl3 (720 aa).

The chain crosses the membrane as a helical; Signal-anchor for type III membrane protein span at residues 21–41 (ILLYFIHFIISLYTILTYIPF). The Cytoplasmic portion of the chain corresponds to 42-720 (YFLCESKQEK…ADIERMYGRK (679 aa)). Serine 683 is modified (phosphoserine).

It belongs to the ATP-dependent AMP-binding enzyme family. Requires Mg(2+) as cofactor.

Its subcellular location is the mitochondrion outer membrane. The protein resides in the peroxisome membrane. It localises to the microsome membrane. It is found in the endoplasmic reticulum membrane. It carries out the reaction a long-chain fatty acid + ATP + CoA = a long-chain fatty acyl-CoA + AMP + diphosphate. The catalysed reaction is (E)-hexadec-2-enoate + ATP + CoA = (2E)-hexadecenoyl-CoA + AMP + diphosphate. It catalyses the reaction (5Z,8Z,11Z,14Z)-eicosatetraenoate + ATP + CoA = (5Z,8Z,11Z,14Z)-eicosatetraenoyl-CoA + AMP + diphosphate. The enzyme catalyses 15-hydroxy-(5Z,8Z,11Z,13E)-eicosatetraenoate + ATP + CoA = 15-hydroxy-(5Z,8Z,11Z,13E)-eicosatetraenoyl-CoA + AMP + diphosphate. It carries out the reaction 12-hydroxy-(5Z,8Z,10E,14Z)-eicosatetraenoate + ATP + CoA = 12-hydroxy-(5Z,8Z,10E,14Z)-eicosatetraenoyl-CoA + AMP + diphosphate. The catalysed reaction is 5-hydroxy-(6E,8Z,11Z,14Z)-eicosatetraenoate + ATP + CoA = 5-hydroxy-(6E,8Z,11Z,14Z)-eicosatetraenoyl-CoA + AMP + diphosphate. It catalyses the reaction 14,15-epoxy-(5Z,8Z,11Z)-eicosatrienoate + ATP + CoA = 14,15-epoxy-(5Z,8Z,11Z)-eicosatrienoyl-CoA + AMP + diphosphate. The enzyme catalyses 11,12-epoxy-(5Z,8Z,14Z)-eicosatrienoate + ATP + CoA = 11,12-epoxy-(5Z,8Z,14Z)-eicosatrienoyl-CoA + AMP + diphosphate. It carries out the reaction a medium-chain fatty acid + ATP + CoA = a medium-chain fatty acyl-CoA + AMP + diphosphate. The catalysed reaction is hexadecanoate + ATP + CoA = hexadecanoyl-CoA + AMP + diphosphate. It catalyses the reaction tetradecanoate + ATP + CoA = tetradecanoyl-CoA + AMP + diphosphate. The enzyme catalyses dodecanoate + ATP + CoA = dodecanoyl-CoA + AMP + diphosphate. It carries out the reaction octadecanoate + ATP + CoA = octadecanoyl-CoA + AMP + diphosphate. The catalysed reaction is eicosanoate + ATP + CoA = eicosanoyl-CoA + AMP + diphosphate. It catalyses the reaction (9Z)-octadecenoate + ATP + CoA = (9Z)-octadecenoyl-CoA + AMP + diphosphate. The enzyme catalyses (9Z)-hexadecenoate + ATP + CoA = (9Z)-hexadecenoyl-CoA + AMP + diphosphate. It carries out the reaction (9Z,12Z)-octadecadienoate + ATP + CoA = (9Z,12Z)-octadecadienoyl-CoA + AMP + diphosphate. The catalysed reaction is (9Z,12Z,15Z)-octadecatrienoate + ATP + CoA = (9Z,12Z,15Z)-octadecatrienoyl-CoA + AMP + diphosphate. It catalyses the reaction (4Z,7Z,10Z,13Z,16Z,19Z)-docosahexaenoate + ATP + CoA = (4Z,7Z,10Z,13Z,16Z,19Z)-docosahexaenoyl-CoA + AMP + diphosphate. The enzyme catalyses (5Z,8Z,11Z,14Z,17Z)-eicosapentaenoate + ATP + CoA = (5Z,8Z,11Z,14Z,17Z)-eicosapentaenoyl-CoA + AMP + diphosphate. It carries out the reaction a fatty acid + ATP + CoA = a fatty acyl-CoA + AMP + diphosphate. In terms of biological role, acyl-CoA synthetases (ACSL) activates long-chain fatty acids for both synthesis of cellular lipids, and degradation via beta-oxidation. ACSL3 is required for the incorporation of fatty acids into phosphatidylcholine, the major phospholipid located on the surface of VLDL (very low density lipoproteins). Has mainly an anabolic role in energy metabolism. Mediates hepatic lipogenesis. Preferentially uses myristate, laurate, arachidonate and eicosapentaenoate as substrates. Both isoforms exhibit the same level of activity. In Mus musculus (Mouse), this protein is Fatty acid CoA ligase Acsl3.